Reading from the N-terminus, the 687-residue chain is DNA-directed RNA polymerase subunit beta' (687 aa).

Zn(2+)-binding residues include C76, C78, C94, and C97. Mg(2+)-binding residues include D496, D498, and D500.

This sequence belongs to the RNA polymerase beta' chain family. RpoC1 subfamily. In plastids the minimal PEP RNA polymerase catalytic core is composed of four subunits: alpha, beta, beta', and beta''. When a (nuclear-encoded) sigma factor is associated with the core the holoenzyme is formed, which can initiate transcription. The cofactor is Mg(2+). Zn(2+) serves as cofactor.

The protein resides in the plastid. The protein localises to the chloroplast. It catalyses the reaction RNA(n) + a ribonucleoside 5'-triphosphate = RNA(n+1) + diphosphate. DNA-dependent RNA polymerase catalyzes the transcription of DNA into RNA using the four ribonucleoside triphosphates as substrates. The chain is DNA-directed RNA polymerase subunit beta' from Ipomoea purpurea (Common morning glory).